Consider the following 413-residue polypeptide: GDP-mannose-dependent alpha-mannosyltransferase (413 aa).

The protein belongs to the glycosyltransferase group 1 family.

The protein operates within phospholipid metabolism; phosphatidylinositol metabolism. Catalyzes the addition of a mannose residue from GDP-D-mannose to GlcAGroAc2 to generate 1,2-di-O-C16/C18:1-(alpha-D-mannopyranosyl)-(1-4)-(alpha-D-glucopyranosyluronic acid)-(1-3)-glycerol(ManGlcAGroAc2). The protein is GDP-mannose-dependent alpha-mannosyltransferase (mgtA) of Corynebacterium glutamicum (strain ATCC 13032 / DSM 20300 / JCM 1318 / BCRC 11384 / CCUG 27702 / LMG 3730 / NBRC 12168 / NCIMB 10025 / NRRL B-2784 / 534).